The sequence spans 861 residues: Alpha-actinin A (861 aa).

The interval 1-239 (MSEEPTPVSG…VMTYVAQYYH (239 aa)) is actin-binding. 2 Calponin-homology (CH) domains span residues 22–127 (ITQK…LRFA) and 136–242 (LSAK…HHFS). Spectrin repeat units lie at residues 240–365 (HFSA…ALEK), 366–480 (AEQE…TGVK), 481–601 (SSAE…EERK), and 602–714 (VQLA…EQVV). 2 EF-hand domains span residues 729 to 764 (EELS…IGDE) and 765 to 800 (LTEE…SRKG). Residues Asp-742, Asp-744, Asp-746, Lys-748, Glu-753, Asp-778, Asp-780, Asn-782, Thr-784, and Glu-789 each coordinate Ca(2+).

The protein belongs to the alpha-actinin family. As to quaternary structure, homodimer; antiparallel.

It is found in the cytoplasm. It localises to the cell cortex. The protein resides in the contractile vacuole. Its subcellular location is the cytoplasmic vesicle. The protein localises to the phagosome. Functionally, F-actin cross-linking protein which is thought to anchor actin to a variety of intracellular structures. This is a bundling protein. Increases the actin-stimulated ATPase activity of myosin. Involved in vegetative cell growth, phagocytosis, motility and development, probably through stabilization of the actin network in the cortical cytoskeleton. This is Alpha-actinin A (abpA) from Dictyostelium discoideum (Social amoeba).